A 487-amino-acid chain; its full sequence is Cobyric acid synthase (487 aa).

One can recognise a GATase cobBQ-type domain in the interval 248-435 (VLKVIVPVLP…LHGLFEGSQS (188 aa)). The active-site Nucleophile is the cysteine 329. The active site involves histidine 427.

Belongs to the CobB/CobQ family. CobQ subfamily.

The protein operates within cofactor biosynthesis; adenosylcobalamin biosynthesis. Its function is as follows. Catalyzes amidations at positions B, D, E, and G on adenosylcobyrinic A,C-diamide. NH(2) groups are provided by glutamine, and one molecule of ATP is hydrogenolyzed for each amidation. This is Cobyric acid synthase from Pseudomonas entomophila (strain L48).